The sequence spans 369 residues: UDP-N-acetylglucosamine--N-acetylmuramyl-(pentapeptide) pyrophosphoryl-undecaprenol N-acetylglucosamine transferase (369 aa).

UDP-N-acetyl-alpha-D-glucosamine is bound by residues 10-12 (TGG), N124, R166, S196, and Q300.

It belongs to the glycosyltransferase 28 family. MurG subfamily.

It is found in the cell membrane. The catalysed reaction is di-trans,octa-cis-undecaprenyl diphospho-N-acetyl-alpha-D-muramoyl-L-alanyl-D-glutamyl-meso-2,6-diaminopimeloyl-D-alanyl-D-alanine + UDP-N-acetyl-alpha-D-glucosamine = di-trans,octa-cis-undecaprenyl diphospho-[N-acetyl-alpha-D-glucosaminyl-(1-&gt;4)]-N-acetyl-alpha-D-muramoyl-L-alanyl-D-glutamyl-meso-2,6-diaminopimeloyl-D-alanyl-D-alanine + UDP + H(+). It functions in the pathway cell wall biogenesis; peptidoglycan biosynthesis. Functionally, cell wall formation. Catalyzes the transfer of a GlcNAc subunit on undecaprenyl-pyrophosphoryl-MurNAc-pentapeptide (lipid intermediate I) to form undecaprenyl-pyrophosphoryl-MurNAc-(pentapeptide)GlcNAc (lipid intermediate II). This Desulfitobacterium hafniense (strain DSM 10664 / DCB-2) protein is UDP-N-acetylglucosamine--N-acetylmuramyl-(pentapeptide) pyrophosphoryl-undecaprenol N-acetylglucosamine transferase.